Consider the following 116-residue polypeptide: Large ribosomal subunit protein bL20 (116 aa).

It belongs to the bacterial ribosomal protein bL20 family.

Functionally, binds directly to 23S ribosomal RNA and is necessary for the in vitro assembly process of the 50S ribosomal subunit. It is not involved in the protein synthesizing functions of that subunit. The protein is Large ribosomal subunit protein bL20 of Helicobacter pylori (strain G27).